A 189-amino-acid chain; its full sequence is Protein F29A7.6 (189 aa).

Positions 124–161 are disordered; the sequence is KSLGGQKLAALDKKSQSKRERRQQNERNEETTGGRRFN. Residues 133–161 are compositionally biased toward basic and acidic residues; the sequence is ALDKKSQSKRERRQQNERNEETTGGRRFN.

The protein belongs to the MPP6 family.

In Caenorhabditis elegans, this protein is Protein F29A7.6.